Consider the following 431-residue polypeptide: Adenylosuccinate synthetase (431 aa).

GTP is bound by residues 12–18 (GDEGKGK) and 40–42 (GHT). The Proton acceptor role is filled by aspartate 13. 2 residues coordinate Mg(2+): aspartate 13 and glycine 40. IMP-binding positions include 13–16 (DEGK), 38–41 (NAGH), threonine 130, arginine 144, glutamine 225, threonine 240, and arginine 304. Histidine 41 (proton donor) is an active-site residue. Position 300 to 306 (300 to 306 (STTGRPR)) interacts with substrate. Residues arginine 306, 332–334 (KMD), and 414–416 (SIG) contribute to the GTP site.

It belongs to the adenylosuccinate synthetase family. As to quaternary structure, homodimer. Requires Mg(2+) as cofactor.

Its subcellular location is the cytoplasm. The catalysed reaction is IMP + L-aspartate + GTP = N(6)-(1,2-dicarboxyethyl)-AMP + GDP + phosphate + 2 H(+). The protein operates within purine metabolism; AMP biosynthesis via de novo pathway; AMP from IMP: step 1/2. Functionally, plays an important role in the de novo pathway of purine nucleotide biosynthesis. Catalyzes the first committed step in the biosynthesis of AMP from IMP. The chain is Adenylosuccinate synthetase from Syntrophotalea carbinolica (strain DSM 2380 / NBRC 103641 / GraBd1) (Pelobacter carbinolicus).